A 302-amino-acid polypeptide reads, in one-letter code: MTSNEKEMGKSELLVVTGMSGAGKSLVIQSLEDMGFFCVDNLPPVLLPKFVELMAQGNPSLQKVAIAIDLRGKELFKSLVKEIDIIKSRNDVILDVMFLEAKTEKIISRYKESRRAHPLNEQGQRSLIDAINEEREHLSEIRSIANYVIDTTKLKPKELKQRISKFYLDENFETFTINVTSFGFKHGIQMDADLVFDVRFLPNPYYVEELRPFTGLDEPVYNYVMKWKETQIFFDKLTDLLKFMIPGYKKEGKSQLVIAIGCTGGQHRSVALAKRLAEYLNEIFEYNVYVHHRDAHIESGER.

Position 18–25 (18–25) interacts with ATP; sequence GMSGAGKS. GTP is bound at residue 69-72; sequence DLRG.

The protein belongs to the RapZ-like family.

Its function is as follows. Displays ATPase and GTPase activities. The polypeptide is Nucleotide-binding protein SE_0548 (Staphylococcus epidermidis (strain ATCC 12228 / FDA PCI 1200)).